The primary structure comprises 118 residues: Basic phospholipase A2 nigroxin B (118 aa).

Intrachain disulfides connect Cys-11–Cys-70, Cys-25–Cys-117, Cys-27–Cys-43, Cys-42–Cys-98, Cys-49–Cys-91, Cys-59–Cys-84, and Cys-77–Cys-89. Ca(2+)-binding residues include Tyr-26, Gly-28, and Gly-30. His-46 is a catalytic residue. Asp-47 is a binding site for Ca(2+). Asp-92 is an active-site residue.

The protein belongs to the phospholipase A2 family. Group I subfamily. D49 sub-subfamily. Requires Ca(2+) as cofactor. As to expression, expressed by the venom gland.

It localises to the secreted. The enzyme catalyses a 1,2-diacyl-sn-glycero-3-phosphocholine + H2O = a 1-acyl-sn-glycero-3-phosphocholine + a fatty acid + H(+). Its function is as follows. Snake venom phospholipase A2 (PLA2) that has only a weak enzymatic activity. It has a myotoxic activity in vivo (dystrophic effect). PLA2 catalyzes the calcium-dependent hydrolysis of the 2-acyl groups in 3-sn-phosphoglycerides. The sequence is that of Basic phospholipase A2 nigroxin B from Micrurus nigrocinctus (Central American coral snake).